The sequence spans 363 residues: tRNA/tmRNA (uracil-C(5))-methyltransferase (363 aa).

Residues Q187, Y215, N220, E236, and D296 each coordinate S-adenosyl-L-methionine. Residue C321 is the Nucleophile of the active site. E355 (proton acceptor) is an active-site residue.

It belongs to the class I-like SAM-binding methyltransferase superfamily. RNA M5U methyltransferase family. TrmA subfamily.

The catalysed reaction is uridine(54) in tRNA + S-adenosyl-L-methionine = 5-methyluridine(54) in tRNA + S-adenosyl-L-homocysteine + H(+). It catalyses the reaction uridine(341) in tmRNA + S-adenosyl-L-methionine = 5-methyluridine(341) in tmRNA + S-adenosyl-L-homocysteine + H(+). Functionally, dual-specificity methyltransferase that catalyzes the formation of 5-methyluridine at position 54 (m5U54) in all tRNAs, and that of position 341 (m5U341) in tmRNA (transfer-mRNA). This is tRNA/tmRNA (uracil-C(5))-methyltransferase from Pseudomonas fluorescens.